The sequence spans 344 residues: Dihydroorotase (344 aa).

Zn(2+)-binding residues include His-13 and His-15. Substrate is bound by residues 15–17 (HFR) and Asn-41. The Zn(2+) site is built by Lys-98, His-135, and His-173. Residue Lys-98 is modified to N6-carboxylysine. A substrate-binding site is contributed by His-135. Residue Leu-218 coordinates substrate. Zn(2+) is bound at residue Asp-246. Asp-246 is a catalytic residue. Positions 250 and 262 each coordinate substrate.

The protein belongs to the metallo-dependent hydrolases superfamily. DHOase family. Class II DHOase subfamily. Homodimer. It depends on Zn(2+) as a cofactor.

It carries out the reaction (S)-dihydroorotate + H2O = N-carbamoyl-L-aspartate + H(+). It functions in the pathway pyrimidine metabolism; UMP biosynthesis via de novo pathway; (S)-dihydroorotate from bicarbonate: step 3/3. In terms of biological role, catalyzes the reversible cyclization of carbamoyl aspartate to dihydroorotate. In Shewanella sediminis (strain HAW-EB3), this protein is Dihydroorotase.